Consider the following 175-residue polypeptide: UPF0398 protein SSA_1858 (175 aa).

This sequence belongs to the UPF0398 family.

The polypeptide is UPF0398 protein SSA_1858 (Streptococcus sanguinis (strain SK36)).